Here is a 98-residue protein sequence, read N- to C-terminus: Large ribosomal subunit protein uL23 (98 aa).

It belongs to the universal ribosomal protein uL23 family. As to quaternary structure, part of the 50S ribosomal subunit. Contacts protein L29, and trigger factor when it is bound to the ribosome.

Functionally, one of the early assembly proteins it binds 23S rRNA. One of the proteins that surrounds the polypeptide exit tunnel on the outside of the ribosome. Forms the main docking site for trigger factor binding to the ribosome. The chain is Large ribosomal subunit protein uL23 from Cellvibrio japonicus (strain Ueda107) (Pseudomonas fluorescens subsp. cellulosa).